Consider the following 96-residue polypeptide: Large ribosomal subunit protein uL18m (96 aa).

Belongs to the universal ribosomal protein uL18 family.

The protein localises to the mitochondrion. The chain is Large ribosomal subunit protein uL18m (RPL18) from Reclinomonas americana.